We begin with the raw amino-acid sequence, 471 residues long: Ubiquitin carboxyl-terminal hydrolase calypso (471 aa).

A UCH catalytic domain is found at 45 to 276; it reads GWLELESDPG…IRFNLMAVVP (232 aa). Catalysis depends on cysteine 131, which acts as the Nucleophile. Catalysis depends on histidine 213, which acts as the Proton donor. 2 coiled-coil regions span residues 240–256 and 298–324; these read WEDS…VMAE and GTLQ…DTPT. The tract at residues 307 to 326 is disordered; sequence DEQGESGNGDSQRPDTPTTL. Residues 314–326 show a composition bias toward polar residues; that stretch reads NGDSQRPDTPTTL. The ULD domain maps to 375 to 403; it reads NYDKFICTFLSMLAHQGVLGELVSQHLLP. Positions 405–471 are positively charged C-terminal tail required for binding nucleosomes; that stretch reads KKVSGQGAAN…KGRNKCRKRK (67 aa). Residues 412 to 471 are disordered; the sequence is AANRISKQSTTASAGGSTAAGTASTPKTQQQQAAAAKNGKSPSKTPGRRRKGRNKCRKRK. Over residues 420 to 447 the composition is skewed to low complexity; sequence STTASAGGSTAAGTASTPKTQQQQAAAA. Basic residues predominate over residues 457-471; that stretch reads PGRRRKGRNKCRKRK.

This sequence belongs to the peptidase C12 family. BAP1 subfamily. Catalytic component of the polycomb repressive deubiquitinase (PR-DUB) complex, at least composed of caly/calypso, Asx and sba (MBD5/6 homolog). The PR-DUB complex associates with nucleosomes to mediate deubiquitination of histone H2AK118ub1 substrates; the association requires the positively charged C-terminal tail of caly, probably due to direct binding of DNA. Interacts (via ULD domain) with Asx (via DEUBAD domain); the interaction produces a stable heterodimer with a composite binding site for ubiquitin. Homodimerizes (via coiled-coil hinge-region between the UCH and ULD domains) to mediate assembly of 2 copies of the caly-Asx heterodimer into a bisymmetric tetramer; dimerization enhances PR-DUB association with nucleosomes.

The protein localises to the nucleus. The catalysed reaction is Thiol-dependent hydrolysis of ester, thioester, amide, peptide and isopeptide bonds formed by the C-terminal Gly of ubiquitin (a 76-residue protein attached to proteins as an intracellular targeting signal).. Its function is as follows. Catalytic component of the polycomb repressive deubiquitinase (PR-DUB) complex, a complex that specifically mediates deubiquitination of histone H2A monoubiquitinated at 'Lys-119' (H2AK118ub1). Mediates bisymmetric organization of the PR-DUB complex and is involved in association with nucleosomes to mediate deubiquitination. Does not deubiquitinate monoubiquitinated histone H2B. Required to maintain the transcriptionally repressive state of homeotic genes throughout development. The PR-DUB complex has weak or no activity toward 'Lys-48'- and 'Lys-63'-linked polyubiquitin chains. Polycomb group (PcG) protein. The chain is Ubiquitin carboxyl-terminal hydrolase calypso from Drosophila melanogaster (Fruit fly).